The chain runs to 172 residues: ATP synthase subunit b (172 aa).

A helical membrane pass occupies residues 13-33; it reads GINGGDILFQLVMFLILLALL.

The protein belongs to the ATPase B chain family. As to quaternary structure, F-type ATPases have 2 components, F(1) - the catalytic core - and F(0) - the membrane proton channel. F(1) has five subunits: alpha(3), beta(3), gamma(1), delta(1), epsilon(1). F(0) has three main subunits: a(1), b(2) and c(10-14). The alpha and beta chains form an alternating ring which encloses part of the gamma chain. F(1) is attached to F(0) by a central stalk formed by the gamma and epsilon chains, while a peripheral stalk is formed by the delta and b chains.

Its subcellular location is the cell membrane. F(1)F(0) ATP synthase produces ATP from ADP in the presence of a proton or sodium gradient. F-type ATPases consist of two structural domains, F(1) containing the extramembraneous catalytic core and F(0) containing the membrane proton channel, linked together by a central stalk and a peripheral stalk. During catalysis, ATP synthesis in the catalytic domain of F(1) is coupled via a rotary mechanism of the central stalk subunits to proton translocation. In terms of biological role, component of the F(0) channel, it forms part of the peripheral stalk, linking F(1) to F(0). The chain is ATP synthase subunit b from Priestia megaterium (strain ATCC 12872 / QMB1551) (Bacillus megaterium).